The sequence spans 466 residues: MTMLDTVQHHSQPQSGVPQNHLADEFVETLRLAVPMMLTQLGQIAMITTDLALIGRLGEDAVAAAALAHTVYFVSFTFGLGLMAAVSPLVAQAFGAGDVRRIRRALRVGLWVALLISLPMMASPLYGEHILIALGQVPQSAALAQRYLNGLAWGIAPALGFIALRGMMSAVNRPQPPLWITVAAIPVNAALVYVLIHGLFGLPELGLFGAGLATTLVNLGTFLAVLAIAAWRKPFSDYRPLAHLWRIDWPLVRQLIALGAPISSSLLLEYGLFSSAALLMGLISTTALAAHQIALQVTAVLFMVPLGIGMAATVRVGHAFGRNDPAAVRRAGLVAAVLGVALVSALTVAIILGRYELGRLFFGGSEASAATVELTATLLLVGATFFIADGLQTIMGGALRGINDTRMTLAFAAIGYWCVAFPVAWVLAFHTGLGAVGVWIGFSIGTFVYAGLLVLRFRMLARRLVG.

The next 11 helical transmembrane spans lie at 68-90, 110-132, 142-164, 177-199, 209-231, 251-273, 288-310, 331-353, 368-387, 407-429, and 433-455; these read AHTV…SPLV, LWVA…HILI, ALAQ…FIAL, PLWI…IHGL, GAGL…IAAW, LVRQ…YGLF, LAAH…GIGM, AGLV…IILG, SAAT…TFFI, MTLA…VLAF, and LGAV…LLVL.

The protein belongs to the multi antimicrobial extrusion (MATE) (TC 2.A.66.1) family.

It is found in the cell inner membrane. Multidrug efflux pump. In Bradyrhizobium diazoefficiens (strain JCM 10833 / BCRC 13528 / IAM 13628 / NBRC 14792 / USDA 110), this protein is Probable multidrug resistance protein NorM (norM).